The sequence spans 201 residues: Recombination protein RecR (201 aa).

Residues 59 to 74 (CEICGNMDTENICRIC) form a C4-type zinc finger. Residues 82-177 (SIIAIVETVA…KISRLASGIP (96 aa)) form the Toprim domain.

Belongs to the RecR family.

In terms of biological role, may play a role in DNA repair. It seems to be involved in an RecBC-independent recombinational process of DNA repair. It may act with RecF and RecO. The polypeptide is Recombination protein RecR (Rickettsia rickettsii (strain Iowa)).